Reading from the N-terminus, the 503-residue chain is METLQHLILHDMPNSEEIEAVKSGDHTLTYKGYRKRINQLANAMLQKGIQKGDRVALLCKNGHPASTVMFAALEIGAVVVPVSWQLKPYEMTGILKASEPKAMFYGAEFKEILDEVLPELSSLCVTMETGTAYETSAEFEALFAGPDHLPETEMVSPDDTALLMFTSGTTGNPKRCMITHGGIYRYVKKSNSSIARMKGLRFLACHPIYHTSALICIMLGTFAETTFVFTKDQDPVHMLKVIEEEKIQTVMALPVFYTYLLEAWEKHQTDLSSLVILMTGGTKVPSSLISRYLDIGIPLAHGYGSTEAWGISTWTPDMGMDKAASAGKPVAGVKVKVEDPLTGEELPQGEIGEIVVHTPFLFKGYEDNPEATAKVLQNGWFRTGDSGYVDEDGFIFITGRYKDVIIYGGDNVYPDQVEEVIQQIPGILETAVVGIPDPLYGEKPKAFIVKNGGQRITEEDVIAFCKERLSAYKIPEVEFVNELPKNNLGKVKKDVLRNQAVHS.

Belongs to the ATP-dependent AMP-binding enzyme family.

The sequence is that of Putative acyl--CoA ligase YdaB (ydaB) from Bacillus subtilis (strain 168).